Reading from the N-terminus, the 405-residue chain is BRCA1-A complex subunit Abraxas 1 (405 aa).

Positions 7 to 153 constitute an MPN domain; that stretch reads SALLSGFVFG…CSTYRLEHAL (147 aa). The stretch at 208–262 forms a coiled coil; it reads SLQEVHKINEMYATLQEELKKMCSDVEVSERSVEKLLTEVSQLKEEINRKKQHKI. Residues 365–405 form a disordered region; it reads LHQDEEDCNQETKLALSSAETDEEALENPKDTNEYSYSPTF. Phosphoserine is present on Ser402. The pSXXF motif motif lies at 402–405; it reads SPTF.

It belongs to the FAM175 family. Abraxas subfamily. In terms of assembly, component of the BRCA1-A complex. Component of the BRISC complex. Homodimer. Interacts directly (when phosphorylated at Ser-402) with BRCA1. The phosphorylated homodimer can interact directly with two BRCA1 chains, giving rise to a heterotetramer. In terms of processing, phosphorylation of Ser-402 of the pSXXF motif by ATM or ATR constitutes a specific recognition motif for the BRCT domain of BRCA1.

The protein resides in the nucleus. In terms of biological role, involved in DNA damage response and double-strand break (DSB) repair. Component of the BRCA1-A complex, acting as a central scaffold protein that assembles the various components of the complex and mediates the recruitment of BRCA1. The BRCA1-A complex specifically recognizes 'Lys-63'-linked ubiquitinated histones H2A and H2AX at DNA lesion sites, leading to target the BRCA1-BARD1 heterodimer to sites of DNA damage at DSBs. This complex also possesses deubiquitinase activity that specifically removes 'Lys-63'-linked ubiquitin on histones H2A and H2AX. In Gallus gallus (Chicken), this protein is BRCA1-A complex subunit Abraxas 1.